The primary structure comprises 466 residues: Putative proline/betaine transporter (466 aa).

12 helical membrane passes run 20–42 (VVATGIGNAMEWFDFGVYAYTTA), 63–83 (FAALAIAFLLRPIGGVVFGII), 91–111 (VVLTSTIILMAFSTLTIGLLP), 116–136 (IGLWAPILLLLARVLQGFSTG), 164–184 (IGTLSGYIAASIMIAVLTFFL), 191–211 (SFGWRIPFLLGLFLGLFGLYL), 239–259 (IIRFYYIDIFVCFVAVVFFNV), 285–305 (VLITCVMAIMIPLALMFGKLA), 313–332 (VFLIGTGGLTLFSIIAFMLL), 337–354 (FVVIVIGIFILGFFLSTY), 377–397 (VTFNISVSIFGGTTPLVATWL), and 405–425 (LAPAYYLTAISVIGFLVITFL).

It belongs to the major facilitator superfamily. Metabolite:H+ Symporter (MHS) family (TC 2.A.1.6) family.

The protein localises to the cell membrane. Functionally, may be a proton symporter involved in the uptake of osmolytes such as proline and glycine betaine. The protein is Putative proline/betaine transporter (proP) of Staphylococcus aureus (strain MSSA476).